The sequence spans 303 residues: MAESTFKSGFVAIIGRPNVGKSTLLNRIVGEKIAIMSDKAQTTRNKIQGIYTTDNAQVVFIDTPGVHKPQNSLGNFMVKSAFSALHEADAIWFVVDASMPRGRGDDFIISRLNEVTETPIYLLINKVDLIAREELLAIIESYQVDAPTWTEVFPISATEGDNVPELLDNVVSHLDEGPQYFDADQLTDHPERFVIGELIREKVLQLTRQEVPHSVAVVIDKIAREDEEKIHIQASIIVERPTQKNIIIGKQGTMIKNIGTRARKDIERLMGDKVFLETWVKVEPRWRDRPQALQTLGYNEENY.

The Era-type G domain maps to Lys-7 to Glu-176. The interval Gly-15–Ser-22 is G1. Gly-15–Ser-22 is a binding site for GTP. The tract at residues Gln-41–Asn-45 is G2. The segment at Asp-62–Gly-65 is G3. GTP-binding positions include Asp-62 to Val-66 and Asn-125 to Asp-128. Residues Asn-125–Asp-128 are G4. Residues Ile-155 to Ala-157 form a G5 region. One can recognise a KH type-2 domain in the interval Thr-207–Pro-284.

Belongs to the TRAFAC class TrmE-Era-EngA-EngB-Septin-like GTPase superfamily. Era GTPase family. As to quaternary structure, monomer.

The protein resides in the cytoplasm. Its subcellular location is the cell membrane. Its function is as follows. An essential GTPase that binds both GDP and GTP, with rapid nucleotide exchange. Plays a role in 16S rRNA processing and 30S ribosomal subunit biogenesis and possibly also in cell cycle regulation and energy metabolism. This Leuconostoc citreum (strain KM20) protein is GTPase Era.